The chain runs to 1353 residues: Ankyrin repeat domain-containing protein 36B (1353 aa).

ANK repeat units follow at residues 19 to 48 (YHLKRIHRAVLRGNLEKLKYLLLTYYDANK), 52 to 81 (KERTALHLACATGQPEMVHLLVSRRCELNL), 85 to 114 (EDRTPLIKAVQLRQEACATLLLQNGADPNI), 118 to 147 (FGRTALHYAVYNEDTSMIEKLLSHGTNIEE), 151 to 180 (NEYQPLLLAVSRRKVKMVEFLLKKKANVNA), and 184 to 213 (LGRSALILAVTLGEKDIVILLLQHNIDVFS). 2 disordered regions span residues 249–307 (PINS…KDSV) and 349–607 (MGGG…KATS). Positions 250–259 (INSNPVSPQK) are enriched in polar residues. 2 stretches are compositionally biased toward basic and acidic residues: residues 260-272 (QRAEKATSDDKDS) and 295-306 (PAEKATSDEKDS). Polar residues-rich tracts occupy residues 355 to 367 (GTVSSQKQPASKT) and 389 to 400 (GTVSSQKQQALK). Composition is skewed to basic and acidic residues over residues 436–455 (TSDEKDSFSNITREKKDGEI) and 471–491 (SVKEDSVLNIAREKKDGEKSR). The segment covering 579 to 600 (VSNIPTEIKDGQQSGTVSSQKQ) has biased composition (polar residues). 4 coiled-coil regions span residues 731-762 (AEQDLEMASEGEQKRLEEYENNQPQVKNQIHS), 821-908 (IKLK…YRIE), 937-1055 (SETD…DHDQ), and 1119-1344 (VFEH…LQHS).

This sequence belongs to the ANKRD36 family.

The polypeptide is Ankyrin repeat domain-containing protein 36B (ANKRD36B) (Homo sapiens (Human)).